A 387-amino-acid chain; its full sequence is Succinate--CoA ligase [ADP-forming] subunit beta (387 aa).

Residues 9–236 (KELFAKHNVP…KDATDPLELK (228 aa)) enclose the ATP-grasp domain. ATP contacts are provided by residues Lys45, 52–54 (GRG), Ser94, and Glu99. Asn191 and Asp205 together coordinate Mg(2+). Substrate-binding positions include Asn256 and 318 to 320 (GIT).

This sequence belongs to the succinate/malate CoA ligase beta subunit family. In terms of assembly, heterotetramer of two alpha and two beta subunits. It depends on Mg(2+) as a cofactor.

The catalysed reaction is succinate + ATP + CoA = succinyl-CoA + ADP + phosphate. It carries out the reaction GTP + succinate + CoA = succinyl-CoA + GDP + phosphate. It participates in carbohydrate metabolism; tricarboxylic acid cycle; succinate from succinyl-CoA (ligase route): step 1/1. Functionally, succinyl-CoA synthetase functions in the citric acid cycle (TCA), coupling the hydrolysis of succinyl-CoA to the synthesis of either ATP or GTP and thus represents the only step of substrate-level phosphorylation in the TCA. The beta subunit provides nucleotide specificity of the enzyme and binds the substrate succinate, while the binding sites for coenzyme A and phosphate are found in the alpha subunit. This is Succinate--CoA ligase [ADP-forming] subunit beta from Mycolicibacterium vanbaalenii (strain DSM 7251 / JCM 13017 / BCRC 16820 / KCTC 9966 / NRRL B-24157 / PYR-1) (Mycobacterium vanbaalenii).